A 226-amino-acid polypeptide reads, in one-letter code: Probable amino-acid ABC transporter permease protein YckA (226 aa).

An ABC transmembrane type-1 domain is found at 27-215 (IGYTLLISFV…AICSIAAVFQ (189 aa)). 5 consecutive transmembrane segments (helical) span residues 31 to 51 (LLIS…ISLA), 73 to 93 (VPIL…GIEF), 94 to 114 (SAVT…IAEI), 160 to 180 (VLLD…PELL), and 194 to 214 (MTMY…AAVF).

The protein belongs to the binding-protein-dependent transport system permease family. HisMQ subfamily.

Its subcellular location is the cell membrane. Part of a binding-protein-dependent transport system. Probably responsible for the translocation of the substrate across the membrane. The polypeptide is Probable amino-acid ABC transporter permease protein YckA (yckA) (Bacillus subtilis (strain 168)).